The sequence spans 245 residues: NADH-quinone oxidoreductase subunit C (245 aa).

Over residues Met1–Asp10 the composition is skewed to basic and acidic residues. Disordered regions lie at residues Met1–Gly54 and Pro216–Gln245. Residues Gly11–Ala28 show a composition bias toward low complexity. Residues Gly39–Gly54 show a composition bias toward gly residues.

Belongs to the complex I 30 kDa subunit family. NDH-1 is composed of 14 different subunits. Subunits NuoB, C, D, E, F, and G constitute the peripheral sector of the complex.

It is found in the cell membrane. The catalysed reaction is a quinone + NADH + 5 H(+)(in) = a quinol + NAD(+) + 4 H(+)(out). In terms of biological role, NDH-1 shuttles electrons from NADH, via FMN and iron-sulfur (Fe-S) centers, to quinones in the respiratory chain. The immediate electron acceptor for the enzyme in this species is believed to be a menaquinone. Couples the redox reaction to proton translocation (for every two electrons transferred, four hydrogen ions are translocated across the cytoplasmic membrane), and thus conserves the redox energy in a proton gradient. The chain is NADH-quinone oxidoreductase subunit C from Salinispora tropica (strain ATCC BAA-916 / DSM 44818 / JCM 13857 / NBRC 105044 / CNB-440).